The primary structure comprises 298 residues: uncharacterized protein (298 aa).

Its subcellular location is the cytoplasm. It is found in the nucleus. This is an uncharacterized protein from Schizosaccharomyces pombe (strain 972 / ATCC 24843) (Fission yeast).